Consider the following 258-residue polypeptide: uncharacterized protein (258 aa).

4 consecutive transmembrane segments (helical) span residues 33–53, 59–79, 88–108, and 140–160; these read LFVI…VTTN, FDSW…IFVF, LLYL…FSFF, and IIAL…WLIQ. The disordered stretch occupies residues 237–258; the sequence is NNKINSELQPPSILNKNSKPIE. Positions 242–258 are enriched in polar residues; the sequence is SELQPPSILNKNSKPIE.

It localises to the membrane. This is an uncharacterized protein from Dictyostelium discoideum (Social amoeba).